The following is a 219-amino-acid chain: Lipoprotein-releasing system ATP-binding protein LolD (219 aa).

Positions 3–219 (IEARNIRKSF…HMRDGLLFSE (217 aa)) constitute an ABC transporter domain. 35–42 (GTSGAGKT) contacts ATP.

This sequence belongs to the ABC transporter superfamily. Lipoprotein translocase (TC 3.A.1.125) family. In terms of assembly, the complex is composed of two ATP-binding proteins (LolD) and two transmembrane proteins (LolC and LolE).

It localises to the cell inner membrane. In terms of biological role, part of the ABC transporter complex LolCDE involved in the translocation of mature outer membrane-directed lipoproteins, from the inner membrane to the periplasmic chaperone, LolA. Responsible for the formation of the LolA-lipoprotein complex in an ATP-dependent manner. The sequence is that of Lipoprotein-releasing system ATP-binding protein LolD from Porphyromonas gingivalis (strain ATCC BAA-308 / W83).